The following is a 329-amino-acid chain: Phosphate acyltransferase (329 aa).

It belongs to the PlsX family. Homodimer. Probably interacts with PlsY.

It localises to the cytoplasm. The enzyme catalyses a fatty acyl-[ACP] + phosphate = an acyl phosphate + holo-[ACP]. It participates in lipid metabolism; phospholipid metabolism. Functionally, catalyzes the reversible formation of acyl-phosphate (acyl-PO(4)) from acyl-[acyl-carrier-protein] (acyl-ACP). This enzyme utilizes acyl-ACP as fatty acyl donor, but not acyl-CoA. The sequence is that of Phosphate acyltransferase from Exiguobacterium sp. (strain ATCC BAA-1283 / AT1b).